The sequence spans 473 residues: Ribulose bisphosphate carboxylase large chain (473 aa).

The substrate site is built by asparagine 116 and threonine 166. Lysine 168 (proton acceptor) is an active-site residue. Lysine 170 contacts substrate. 3 residues coordinate Mg(2+): lysine 194, aspartate 196, and glutamate 197. Lysine 194 is subject to N6-carboxylysine. Histidine 287 functions as the Proton acceptor in the catalytic mechanism. The substrate site is built by arginine 288, histidine 320, and serine 372.

It belongs to the RuBisCO large chain family. Type I subfamily. As to quaternary structure, heterohexadecamer of 8 large chains and 8 small chains. Mg(2+) is required as a cofactor.

The catalysed reaction is 2 (2R)-3-phosphoglycerate + 2 H(+) = D-ribulose 1,5-bisphosphate + CO2 + H2O. It carries out the reaction D-ribulose 1,5-bisphosphate + O2 = 2-phosphoglycolate + (2R)-3-phosphoglycerate + 2 H(+). Functionally, ruBisCO catalyzes two reactions: the carboxylation of D-ribulose 1,5-bisphosphate, the primary event in carbon dioxide fixation, as well as the oxidative fragmentation of the pentose substrate. Both reactions occur simultaneously and in competition at the same active site. The sequence is that of Ribulose bisphosphate carboxylase large chain from Nitrosomonas sp. (strain ENI-11).